The following is a 309-amino-acid chain: Putative lipid kinase YtlR (309 aa).

One can recognise a DAGKc domain in the interval 1-134 (MSHWFFIINP…FHLGSVNFLQ (134 aa)). ATP-binding positions include 9-13 (NPTAG), Thr-40, and 69-75 (GDGTMHE). Mg(2+) contacts are provided by Asn-229, Glu-232, and Thr-234. Glu-289 (proton acceptor) is an active-site residue.

Belongs to the diacylglycerol/lipid kinase family. Requires Mg(2+) as cofactor.

May catalyze the ATP-dependent phosphorylation of lipids other than diacylglycerol (DAG). In fact, is not able to exhibit diacylglycerol kinase activity in vitro. The polypeptide is Putative lipid kinase YtlR (ytlR) (Bacillus subtilis (strain 168)).